The sequence spans 296 residues: Non-homologous end joining protein Ku (296 aa).

A Ku domain is found at 11–187 (TFGLVNIPVK…ELPEAGEPSS (177 aa)). A disordered region spans residues 254–296 (AAARRRGDEHEAPARGERRHAAAAAARTTGRPRAARASRKKRG). The segment covering 258 to 273 (RRGDEHEAPARGERRH) has biased composition (basic and acidic residues). A compositionally biased stretch (low complexity) spans 275-285 (AAAAARTTGRP). Residues 286–296 (RAARASRKKRG) are compositionally biased toward basic residues.

Belongs to the prokaryotic Ku family. As to quaternary structure, homodimer. Interacts with LigD.

Its function is as follows. With LigD forms a non-homologous end joining (NHEJ) DNA repair enzyme, which repairs dsDNA breaks with reduced fidelity. Binds linear dsDNA with 5'- and 3'- overhangs but not closed circular dsDNA nor ssDNA. Recruits and stimulates the ligase activity of LigD. The polypeptide is Non-homologous end joining protein Ku (Anaeromyxobacter sp. (strain K)).